A 293-amino-acid chain; its full sequence is uncharacterized protein (293 aa).

Disordered regions lie at residues 1–114 (MFLR…IPKL) and 268–293 (EETADWESEGQEREAKEQREGPGRML). A phosphoserine mark is found at Ser-34, Ser-35, and Ser-89. Basic and acidic residues-rich tracts occupy residues 73 to 95 (SSRDLKVDQLGSKRMDSLKRDKT) and 277 to 293 (GQEREAKEQREGPGRML).

This is an uncharacterized protein from Mus musculus (Mouse).